The sequence spans 101 residues: Small ribosomal subunit protein bS18c (101 aa).

Belongs to the bacterial ribosomal protein bS18 family. As to quaternary structure, part of the 30S ribosomal subunit.

The protein localises to the plastid. It localises to the chloroplast. This chain is Small ribosomal subunit protein bS18c, found in Guizotia abyssinica (Niger).